The primary structure comprises 145 residues: ATP synthase epsilon chain (145 aa).

Residues 93–104 show a composition bias toward basic and acidic residues; sequence AEAEKARARAQE. Residues 93–113 are disordered; the sequence is AEAEKARARAQEALKNPDASK.

Belongs to the ATPase epsilon chain family. As to quaternary structure, F-type ATPases have 2 components, CF(1) - the catalytic core - and CF(0) - the membrane proton channel. CF(1) has five subunits: alpha(3), beta(3), gamma(1), delta(1), epsilon(1). CF(0) has three main subunits: a, b and c.

The protein localises to the cell inner membrane. Functionally, produces ATP from ADP in the presence of a proton gradient across the membrane. This is ATP synthase epsilon chain from Francisella philomiragia subsp. philomiragia (strain ATCC 25017 / CCUG 19701 / FSC 153 / O#319-036).